Consider the following 604-residue polypeptide: Tyrosine-protein kinase transforming protein erbB (604 aa).

One can recognise a Protein kinase domain in the interval 132–399; sequence FKKVKVLGSG…KMARDPPRYL (268 aa). ATP contacts are provided by residues 138-146 and Lys165; that span reads LGSGAFGTI. Asp257 (proton acceptor) is an active-site residue.

The protein belongs to the protein kinase superfamily. Tyr protein kinase family. EGF receptor subfamily.

It catalyses the reaction L-tyrosyl-[protein] + ATP = O-phospho-L-tyrosyl-[protein] + ADP + H(+). Its function is as follows. The v-erbB oncogene transforms avian fibroblasts and erythroblasts in culture and induces sarcomas and erythroleukemias in chickens. It is a truncated and mutated version of the receptor for epidermal growth factor. The chain is Tyrosine-protein kinase transforming protein erbB (V-ERBB) from Galliformes.